Here is a 480-residue protein sequence, read N- to C-terminus: ATP synthase subunit beta (480 aa).

166–173 serves as a coordination point for ATP; it reads GGAGVGKT.

This sequence belongs to the ATPase alpha/beta chains family. In terms of assembly, F-type ATPases have 2 components, CF(1) - the catalytic core - and CF(0) - the membrane proton channel. CF(1) has five subunits: alpha(3), beta(3), gamma(1), delta(1), epsilon(1). CF(0) has three main subunits: a(1), b(2) and c(9-12). The alpha and beta chains form an alternating ring which encloses part of the gamma chain. CF(1) is attached to CF(0) by a central stalk formed by the gamma and epsilon chains, while a peripheral stalk is formed by the delta and b chains.

It is found in the cell membrane. The catalysed reaction is ATP + H2O + 4 H(+)(in) = ADP + phosphate + 5 H(+)(out). Produces ATP from ADP in the presence of a proton gradient across the membrane. The catalytic sites are hosted primarily by the beta subunits. The sequence is that of ATP synthase subunit beta from Streptomyces griseus subsp. griseus (strain JCM 4626 / CBS 651.72 / NBRC 13350 / KCC S-0626 / ISP 5235).